The primary structure comprises 247 residues: Chalcone--flavanone isomerase (247 aa).

The substrate site is built by T56, N121, and S198. Residues 223–235 (ENKVEEDATKTDQ) are compositionally biased toward basic and acidic residues. Positions 223–247 (ENKVEEDATKTDQEEANDLSLAKEN) are disordered.

Belongs to the chalcone isomerase family.

The enzyme catalyses a chalcone = a flavanone.. The protein operates within secondary metabolite biosynthesis; flavonoid biosynthesis. Functionally, catalyzes the intramolecular cyclization of bicyclic chalcones into tricyclic (S)-flavanones. Responsible for the isomerization of 4,2',4',6'-tetrahydroxychalcone (also termed chalcone) into naringenin. This chain is Chalcone--flavanone isomerase (CHI), found in Raphanus sativus (Radish).